The primary structure comprises 134 residues: Small ribosomal subunit protein uS11 (134 aa).

The protein belongs to the universal ribosomal protein uS11 family. As to quaternary structure, part of the 30S ribosomal subunit. Interacts with proteins S7 and S18. Binds to IF-3.

In terms of biological role, located on the platform of the 30S subunit, it bridges several disparate RNA helices of the 16S rRNA. Forms part of the Shine-Dalgarno cleft in the 70S ribosome. This chain is Small ribosomal subunit protein uS11, found in Frankia casuarinae (strain DSM 45818 / CECT 9043 / HFP020203 / CcI3).